We begin with the raw amino-acid sequence, 146 residues long: Hemoglobin subunit delta (146 aa).

The Globin domain occupies 2 to 146; that stretch reads HLTGEEKSAV…VATALAHKYH (145 aa). 2 residues coordinate heme b: His63 and His92.

Belongs to the globin family. Heterotetramer of two delta chains and two alpha chains. As to expression, red blood cells.

The polypeptide is Hemoglobin subunit delta (HBD) (Ateles fusciceps (Brown-headed spider monkey)).